The sequence spans 557 residues: Potassium-transporting ATPase potassium-binding subunit (557 aa).

12 helical membrane-spanning segments follow: residues 5-25 (GFLL…PLGS), 63-83 (LCAI…MLLG), 132-152 (GLTV…FAFI), 170-190 (LLRI…LFLI), 253-273 (FVQM…FGEV), 283-303 (LLWA…WAEV), 329-349 (VLVS…AVIA), 356-376 (ALGG…FGGV), 379-399 (GLYG…LMIG), 416-436 (LTAL…ALAM), 484-504 (LLAF…MAIA), and 526-546 (LFVG…FIPA).

Belongs to the KdpA family. The system is composed of three essential subunits: KdpA, KdpB and KdpC.

It is found in the cell inner membrane. Its function is as follows. Part of the high-affinity ATP-driven potassium transport (or Kdp) system, which catalyzes the hydrolysis of ATP coupled with the electrogenic transport of potassium into the cytoplasm. This subunit binds the periplasmic potassium ions and delivers the ions to the membrane domain of KdpB through an intramembrane tunnel. The sequence is that of Potassium-transporting ATPase potassium-binding subunit from Shigella boydii serotype 18 (strain CDC 3083-94 / BS512).